We begin with the raw amino-acid sequence, 127 residues long: Small ribosomal subunit protein uS13 (127 aa).

The disordered stretch occupies residues Gly95–Lys127. The segment covering Arg108–Lys127 has biased composition (basic residues).

It belongs to the universal ribosomal protein uS13 family. As to quaternary structure, part of the 30S ribosomal subunit. Forms a loose heterodimer with protein S19. Forms two bridges to the 50S subunit in the 70S ribosome.

Located at the top of the head of the 30S subunit, it contacts several helices of the 16S rRNA. In the 70S ribosome it contacts the 23S rRNA (bridge B1a) and protein L5 of the 50S subunit (bridge B1b), connecting the 2 subunits; these bridges are implicated in subunit movement. Contacts the tRNAs in the A and P-sites. In Desulfatibacillum aliphaticivorans, this protein is Small ribosomal subunit protein uS13.